The chain runs to 2465 residues: Serine/threonine-protein kinase TOR (2465 aa).

11 HEAT repeats span residues 184–221 (VHVP…VIEK), 271–308 (SRYR…FLRD), 348–389 (AELV…AMGP), 549–587 (RLVE…FDDF), 588–625 (LAQA…KNPA), 717–755 (QYLP…STGY), 761–799 (NEYP…LDPH), 888–926 (PYLP…IVRQ), 981–1018 (MYIL…VFGG), 1022–1059 (EHMH…TVQV), and 1061–1098 (THVS…ALGE). The interval 1158-1191 (DFGGVPSEEADETQRQPRSHQVNDVRLRSAGEAS) is disordered. The FAT domain maps to 1297–1877 (LLGALAEKCR…MYPLLVACKS (581 aa)). The 319-residue stretch at 2051–2369 (FVPQLIVITS…PPRGAREREL (319 aa)) folds into the PI3K/PI4K catalytic domain. Positions 2057 to 2063 (VITSKQR) are G-loop. Residues 2230–2238 (GLGDRHPSN) are catalytic loop. The tract at residues 2250–2275 (HIDFGDCFEASMNREKFPEKVPFRLT) is activation loop. The disordered stretch occupies residues 2401–2431 (RDFSSGSSLSGAGSSTQHGNEHLASGDTREV). A compositionally biased stretch (low complexity) spans 2404–2415 (SSGSSLSGAGSS). Positions 2433–2465 (PGLSVKVQVQRLILQATSHENLCQNYVGWCPFW) constitute an FATC domain.

Belongs to the PI3/PI4-kinase family. As to quaternary structure, the target of rapamycin complex 1 (TORC1) is composed of at least RAPTOR, LST8 and TOR.

It carries out the reaction L-seryl-[protein] + ATP = O-phospho-L-seryl-[protein] + ADP + H(+). The enzyme catalyses L-threonyl-[protein] + ATP = O-phospho-L-threonyl-[protein] + ADP + H(+). Insensitive to inhibition by rapamycin. Its function is as follows. Component of TORC1 complex, which is an essential cell growth regulator that controls plant development. Acts through the phosphorylation of downstream effectors that are recruited by the binding partner RAPTOR. Acts by activating transcription, protein synthesis and ribosome biogenesis, and inhibiting mRNA degradation and autophagy. This Oryza sativa subsp. japonica (Rice) protein is Serine/threonine-protein kinase TOR.